The sequence spans 193 residues: Xanthine phosphoribosyltransferase (193 aa).

Positions 20 and 27 each coordinate xanthine. Position 128 to 132 (128 to 132 (ANGQA)) interacts with 5-phospho-alpha-D-ribose 1-diphosphate. Residue Lys156 coordinates xanthine.

The protein belongs to the purine/pyrimidine phosphoribosyltransferase family. Xpt subfamily. As to quaternary structure, homodimer.

The protein localises to the cytoplasm. The catalysed reaction is XMP + diphosphate = xanthine + 5-phospho-alpha-D-ribose 1-diphosphate. Its pathway is purine metabolism; XMP biosynthesis via salvage pathway; XMP from xanthine: step 1/1. In terms of biological role, converts the preformed base xanthine, a product of nucleic acid breakdown, to xanthosine 5'-monophosphate (XMP), so it can be reused for RNA or DNA synthesis. The polypeptide is Xanthine phosphoribosyltransferase (Streptococcus pneumoniae (strain P1031)).